The primary structure comprises 203 residues: VEL1-related protein SPBPB2B2.15 (203 aa).

The N-terminal stretch at 1–16 (MFKNLIFLFFIGLATA) is a signal peptide.

This sequence belongs to the VEL1 family.

Its subcellular location is the cytoplasm. It is found in the cytosol. The sequence is that of VEL1-related protein SPBPB2B2.15 from Schizosaccharomyces pombe (strain 972 / ATCC 24843) (Fission yeast).